The following is a 1523-amino-acid chain: Slit homolog 3 protein (1523 aa).

The first 33 residues, 1 to 33 (MALGRTGAGAAVRARLALGLALASILSGPPAAA), serve as a signal peptide directing secretion. One can recognise an LRRNT domain in the interval 34 to 61 (CPTKCTCSAASVDCHGLGLRAVPRGIPR). LRR repeat units lie at residues 62–83 (NAERLDLDRNNITRITKMDFAG), 86–107 (NLRVLHLEDNQVSIIERGAFQD), 110–131 (QLERLRLNKNKLQVLPELLFQS), 134–155 (KLTRLDLSENQIQGIPRKAFRG), 158–179 (GVKNLQLDNNHISCIEDGAFRA), and 182–203 (DLEILTLNNNNISRILVTSFNH). N-linked (GlcNAc...) asparagine glycosylation occurs at Asn-72. N-linked (GlcNAc...) asparagine glycosylation is present at Asn-192. In terms of domain architecture, LRRCT 1 spans 215–265 (NHLYCDCHLAWLSDWLRQRRTIGQFTLCMAPVHLRGFSVADVQKKEYVCPG). The LRRNT 2 domain occupies 271 to 307 (PACNANSLSCPSACSCSNNIVDCRGKGLTEIPANLPE). The cysteines at positions 284 and 293 are disulfide-linked. LRR repeat units follow at residues 308–329 (GIVEIRLEQNSIKSIPAGAFTQ), 332–353 (KLKRIDISKNQISDIAPDAFQG), 356–377 (SLTSLVLYGNKITEIPKGLFDG), 380–401 (SLQLLLLNANKINCLRVNTFQD), and 404–425 (NLNLLSLYDNKLQTISKGLFVP). Residues 437–487 (NPFVCDCHLKWLADYLQDNPIETSGARCSSPRRLANKRISQIKSKKFRCSG) enclose the LRRCT 2 domain. 4 disulfide bridges follow: Cys-441/Cys-464, Cys-443/Cys-485, Cys-505/Cys-511, and Cys-509/Cys-518. In terms of domain architecture, LRRNT 3 spans 496–532 (SSECFMDLVCPEKCRCEGTIVDCSNQKLARIPSHLPE). LRR repeat units follow at residues 533–554 (YTTDLRLNDNDISVLEATGIFK), 558–579 (NLRKINLSNNRIKEVREGAFDG), 582–603 (GVQELMLTGNQLETMHGRMFRG), 606–627 (SLKTLMLRSNLISCVSNDTFAG), and 630–651 (SVRLLSLYDNRITTITPGAFTT). Asn-563 carries an N-linked (GlcNAc...) asparagine glycan. N-linked (GlcNAc...) asparagine glycosylation is present at Asn-622. The region spanning 663–713 (NPFNCNCHMAWLGRWLRKRRIVSGNPRCQKPFFLKEIPIQDVAIQDFTCDG) is the LRRCT 3 domain. 2 disulfide bridges follow: Cys-667–Cys-690 and Cys-669–Cys-711. Positions 716–752 (ESSCQLSPRCPEQCTCVETVVRCSNRGLHALPKGMPK) constitute an LRRNT 4 domain. LRR repeat units lie at residues 753–774 (DVTELYLEGNHLTAVPKELSAF), 776–797 (QLTLIDLSNNSISMLTNHTFSN), 800–821 (HLSTLILSYNRLRCIPVHAFNG), and 824–845 (SLRVLTLHGNDISSVPEGSFND). Asn-784, Asn-792, and Asn-797 each carry an N-linked (GlcNAc...) asparagine glycan. One can recognise an LRRCT 4 domain in the interval 857–907 (NPLHCDCSLRWLSEWVKAGYKEPGIARCSSPESMADRLLLTTPTHRFQCKG). 6 EGF-like domains span residues 918–953 (NACLSSPCKNNGTCSQDPVEQYRCTCPYSYKGKDCT), 955–994 (PINTCVQNPCEHGGTCHLSENLRDGFSCSCPLGFEGQRCE), 996–1032 (NPDDCEDNDCENSATCVDGINNYACLCPPNYTGELCD), 1034–1072 (VIDYCVPEMNLCQHEAKCISLDKGFRCECVPGYSGKLCE), 1074–1110 (NNDDCVAHKCRHGAQCVDEVNGYTCICPQGFSGLFCE), and 1119–1155 (QTSPCDQYECQNGAQCIVVQQEPTCRCPPGFAGPRCE). 18 cysteine pairs are disulfide-bonded: Cys-920-Cys-931, Cys-925-Cys-941, Cys-943-Cys-952, Cys-959-Cys-970, Cys-964-Cys-982, Cys-984-Cys-993, Cys-1000-Cys-1011, Cys-1005-Cys-1020, Cys-1022-Cys-1031, Cys-1038-Cys-1051, Cys-1045-Cys-1060, Cys-1062-Cys-1071, Cys-1078-Cys-1089, Cys-1083-Cys-1098, Cys-1100-Cys-1109, Cys-1123-Cys-1134, Cys-1128-Cys-1143, and Cys-1145-Cys-1154. N-linked (GlcNAc...) asparagine glycosylation occurs at Asn-928. Asn-1025 carries N-linked (GlcNAc...) asparagine glycosylation. Residues 1158–1332 (ITVNFVGKDS…PQSLGVSPGC (175 aa)) form the Laminin G-like domain. Asn-1181 and Asn-1247 each carry an N-linked (GlcNAc...) asparagine glycan. Cystine bridges form between Cys-1305/Cys-1332, Cys-1355/Cys-1364, Cys-1372/Cys-1382, Cys-1377/Cys-1391, and Cys-1393/Cys-1402. 2 consecutive EGF-like domains span residues 1340 to 1365 (HGLCRSVEKDSVVCECHPGWTGPLCD) and 1368 to 1403 (ARDPCLGHSCRHGTCMATGDSYVCKCAEGYGGALCD). N-linked (GlcNAc...) asparagine glycosylation is present at Asn-1406. Positions 1408–1444 (SASACSAFKCHHGQCHISDRGEPYCLCQPGFSGHHCE) constitute an EGF-like 9 domain. 7 cysteine pairs are disulfide-bonded: Cys-1412–Cys-1422, Cys-1417–Cys-1432, Cys-1434–Cys-1443, Cys-1449–Cys-1487, Cys-1467–Cys-1501, Cys-1478–Cys-1517, and Cys-1482–Cys-1519. A CTCK domain is found at 1449-1523 (CMGEIVREAI…HLECGCRACS (75 aa)).

The protein localises to the secreted. Its function is as follows. May act as molecular guidance cue in cellular migration, and function may be mediated by interaction with roundabout homolog receptors. The protein is Slit homolog 3 protein (Slit3) of Mus musculus (Mouse).